A 317-amino-acid polypeptide reads, in one-letter code: Beta-ketoacyl-[acyl-carrier-protein] synthase III (317 aa).

Catalysis depends on residues Cys-112 and His-244. Residues 245–249 are ACP-binding; that stretch reads QANLR. The active site involves Asn-274.

The protein belongs to the thiolase-like superfamily. FabH family. In terms of assembly, homodimer.

The protein localises to the cytoplasm. The catalysed reaction is malonyl-[ACP] + acetyl-CoA + H(+) = 3-oxobutanoyl-[ACP] + CO2 + CoA. The protein operates within lipid metabolism; fatty acid biosynthesis. Its function is as follows. Catalyzes the condensation reaction of fatty acid synthesis by the addition to an acyl acceptor of two carbons from malonyl-ACP. Catalyzes the first condensation reaction which initiates fatty acid synthesis and may therefore play a role in governing the total rate of fatty acid production. Possesses both acetoacetyl-ACP synthase and acetyl transacylase activities. Its substrate specificity determines the biosynthesis of branched-chain and/or straight-chain of fatty acids. This is Beta-ketoacyl-[acyl-carrier-protein] synthase III from Salmonella typhimurium (strain LT2 / SGSC1412 / ATCC 700720).